The sequence spans 562 residues: Dihydroxy-acid dehydratase (562 aa).

Mg(2+) is bound at residue Asp-80. Cys-121 contacts [2Fe-2S] cluster. 2 residues coordinate Mg(2+): Asp-122 and Lys-123. Lys-123 carries the N6-carboxylysine modification. A [2Fe-2S] cluster-binding site is contributed by Cys-194. Glu-446 lines the Mg(2+) pocket. Residue Ser-472 is the Proton acceptor of the active site.

It belongs to the IlvD/Edd family. In terms of assembly, homodimer. It depends on [2Fe-2S] cluster as a cofactor. Mg(2+) is required as a cofactor.

The catalysed reaction is (2R)-2,3-dihydroxy-3-methylbutanoate = 3-methyl-2-oxobutanoate + H2O. It carries out the reaction (2R,3R)-2,3-dihydroxy-3-methylpentanoate = (S)-3-methyl-2-oxopentanoate + H2O. It functions in the pathway amino-acid biosynthesis; L-isoleucine biosynthesis; L-isoleucine from 2-oxobutanoate: step 3/4. Its pathway is amino-acid biosynthesis; L-valine biosynthesis; L-valine from pyruvate: step 3/4. Its function is as follows. Functions in the biosynthesis of branched-chain amino acids. Catalyzes the dehydration of (2R,3R)-2,3-dihydroxy-3-methylpentanoate (2,3-dihydroxy-3-methylvalerate) into 2-oxo-3-methylpentanoate (2-oxo-3-methylvalerate) and of (2R)-2,3-dihydroxy-3-methylbutanoate (2,3-dihydroxyisovalerate) into 2-oxo-3-methylbutanoate (2-oxoisovalerate), the penultimate precursor to L-isoleucine and L-valine, respectively. The sequence is that of Dihydroxy-acid dehydratase from Staphylococcus aureus (strain Mu50 / ATCC 700699).